We begin with the raw amino-acid sequence, 595 residues long: Elongation factor 4 (595 aa).

One can recognise a tr-type G domain in the interval 2–183; that stretch reads KNIRNFCIIA…AIVEQVPAPA (182 aa). Residues 14–19 and 130–133 each bind GTP; these read DHGKST and NKVD.

It belongs to the TRAFAC class translation factor GTPase superfamily. Classic translation factor GTPase family. LepA subfamily.

It is found in the cell inner membrane. It catalyses the reaction GTP + H2O = GDP + phosphate + H(+). Functionally, required for accurate and efficient protein synthesis under certain stress conditions. May act as a fidelity factor of the translation reaction, by catalyzing a one-codon backward translocation of tRNAs on improperly translocated ribosomes. Back-translocation proceeds from a post-translocation (POST) complex to a pre-translocation (PRE) complex, thus giving elongation factor G a second chance to translocate the tRNAs correctly. Binds to ribosomes in a GTP-dependent manner. This chain is Elongation factor 4, found in Porphyromonas gingivalis (strain ATCC BAA-308 / W83).